A 347-amino-acid polypeptide reads, in one-letter code: Lipoyl synthase (347 aa).

The [4Fe-4S] cluster site is built by cysteine 77, cysteine 82, cysteine 88, cysteine 103, cysteine 107, cysteine 110, and serine 317. The 218-residue stretch at 89–306 folds into the Radical SAM core domain; that stretch reads FADGTATFMI…MDYGKKIGFF (218 aa).

It belongs to the radical SAM superfamily. Lipoyl synthase family. It depends on [4Fe-4S] cluster as a cofactor.

It is found in the cytoplasm. It carries out the reaction [[Fe-S] cluster scaffold protein carrying a second [4Fe-4S](2+) cluster] + N(6)-octanoyl-L-lysyl-[protein] + 2 oxidized [2Fe-2S]-[ferredoxin] + 2 S-adenosyl-L-methionine + 4 H(+) = [[Fe-S] cluster scaffold protein] + N(6)-[(R)-dihydrolipoyl]-L-lysyl-[protein] + 4 Fe(3+) + 2 hydrogen sulfide + 2 5'-deoxyadenosine + 2 L-methionine + 2 reduced [2Fe-2S]-[ferredoxin]. Its pathway is protein modification; protein lipoylation via endogenous pathway; protein N(6)-(lipoyl)lysine from octanoyl-[acyl-carrier-protein]: step 2/2. Its function is as follows. Catalyzes the radical-mediated insertion of two sulfur atoms into the C-6 and C-8 positions of the octanoyl moiety bound to the lipoyl domains of lipoate-dependent enzymes, thereby converting the octanoylated domains into lipoylated derivatives. The chain is Lipoyl synthase from Psychrobacter arcticus (strain DSM 17307 / VKM B-2377 / 273-4).